The primary structure comprises 316 residues: 4-hydroxy-3-methylbut-2-enyl diphosphate reductase (316 aa).

Residue Cys12 participates in [4Fe-4S] cluster binding. (2E)-4-hydroxy-3-methylbut-2-enyl diphosphate is bound by residues His41 and His74. Positions 41 and 74 each coordinate dimethylallyl diphosphate. His41 and His74 together coordinate isopentenyl diphosphate. Cys96 lines the [4Fe-4S] cluster pocket. (2E)-4-hydroxy-3-methylbut-2-enyl diphosphate is bound at residue His124. A dimethylallyl diphosphate-binding site is contributed by His124. Residue His124 coordinates isopentenyl diphosphate. Glu126 serves as the catalytic Proton donor. Thr167 contacts (2E)-4-hydroxy-3-methylbut-2-enyl diphosphate. Cys197 serves as a coordination point for [4Fe-4S] cluster. (2E)-4-hydroxy-3-methylbut-2-enyl diphosphate contacts are provided by Ser225, Ser226, Asn227, and Ser269. Dimethylallyl diphosphate-binding residues include Ser225, Ser226, Asn227, and Ser269. Positions 225, 226, 227, and 269 each coordinate isopentenyl diphosphate.

This sequence belongs to the IspH family. In terms of assembly, homodimer. Requires [4Fe-4S] cluster as cofactor.

It catalyses the reaction isopentenyl diphosphate + 2 oxidized [2Fe-2S]-[ferredoxin] + H2O = (2E)-4-hydroxy-3-methylbut-2-enyl diphosphate + 2 reduced [2Fe-2S]-[ferredoxin] + 2 H(+). The catalysed reaction is dimethylallyl diphosphate + 2 oxidized [2Fe-2S]-[ferredoxin] + H2O = (2E)-4-hydroxy-3-methylbut-2-enyl diphosphate + 2 reduced [2Fe-2S]-[ferredoxin] + 2 H(+). It functions in the pathway isoprenoid biosynthesis; dimethylallyl diphosphate biosynthesis; dimethylallyl diphosphate from (2E)-4-hydroxy-3-methylbutenyl diphosphate: step 1/1. It participates in isoprenoid biosynthesis; isopentenyl diphosphate biosynthesis via DXP pathway; isopentenyl diphosphate from 1-deoxy-D-xylulose 5-phosphate: step 6/6. Catalyzes the conversion of 1-hydroxy-2-methyl-2-(E)-butenyl 4-diphosphate (HMBPP) into a mixture of isopentenyl diphosphate (IPP) and dimethylallyl diphosphate (DMAPP). Acts in the terminal step of the DOXP/MEP pathway for isoprenoid precursor biosynthesis. The chain is 4-hydroxy-3-methylbut-2-enyl diphosphate reductase from Klebsiella pneumoniae (strain 342).